Consider the following 62-residue polypeptide: Regulator of rDNA transcription protein 15 (62 aa).

Belongs to the ART2/RRT15 family.

In terms of biological role, involved in modulation of rDNA transcription. In Saccharomyces cerevisiae (strain ATCC 204508 / S288c) (Baker's yeast), this protein is Regulator of rDNA transcription protein 15 (RRT15).